Consider the following 175-residue polypeptide: Inosine/xanthosine triphosphatase (175 aa).

A substrate-binding site is contributed by 8-13 (TTNPAK). Mg(2+) contacts are provided by Asp-38 and Glu-68. Position 68 to 69 (68 to 69 (EA)) interacts with substrate.

The protein belongs to the YjjX NTPase family. As to quaternary structure, homodimer. The cofactor is Mg(2+). Mn(2+) serves as cofactor.

It carries out the reaction XTP + H2O = XDP + phosphate + H(+). The enzyme catalyses ITP + H2O = IDP + phosphate + H(+). In terms of biological role, phosphatase that hydrolyzes non-canonical purine nucleotides such as XTP and ITP to their respective diphosphate derivatives. Probably excludes non-canonical purines from DNA/RNA precursor pool, thus preventing their incorporation into DNA/RNA and avoiding chromosomal lesions. This Yersinia enterocolitica serotype O:8 / biotype 1B (strain NCTC 13174 / 8081) protein is Inosine/xanthosine triphosphatase.